A 317-amino-acid polypeptide reads, in one-letter code: Pinoresinol reductase 2 (317 aa).

Positions 18, 20, 21, 41, 50, 90, 91, 95, 98, and 121 each coordinate NADP(+). Position 125 (Met-125) interacts with (-)-pinoresinol. Positions 144 and 166 each coordinate NADP(+). Lys-144 (proton acceptor) is an active-site residue. Position 178 (Gly-178) interacts with (-)-pinoresinol.

It belongs to the NmrA-type oxidoreductase family. Isoflavone reductase subfamily. Forms homodimers. Expressed in roots. Detected in stems.

The catalysed reaction is (-)-lariciresinol + NADP(+) = (-)-pinoresinol + NADPH + H(+). In terms of biological role, reductase involved in lignan biosynthesis. Unlike conventional pinoresinol reductases that can reduce both pinoresinol and lariciresinol, PRR2 shows a strict substrate selectivity for (-)-pinoresinol. No activity with (+)-pinoresinol or lariciresinol. Abstracts the 4R-hydride from the NADPH cofactor during catalysis. The sequence is that of Pinoresinol reductase 2 from Arabidopsis thaliana (Mouse-ear cress).